The chain runs to 148 residues: Lysozyme C (148 aa).

The signal sequence occupies residues 1 to 18; sequence MKALIVLGLVLLSVTVQG. The 130-residue stretch at 19–148 folds into the C-type lysozyme domain; the sequence is KVFERCELAR…VRQYVQGCGV (130 aa). 4 cysteine pairs are disulfide-bonded: cysteine 24–cysteine 146, cysteine 48–cysteine 134, cysteine 83–cysteine 99, and cysteine 95–cysteine 113. Residues glutamate 53 and aspartate 71 contribute to the active site.

Belongs to the glycosyl hydrolase 22 family. Monomer.

The protein localises to the secreted. It catalyses the reaction Hydrolysis of (1-&gt;4)-beta-linkages between N-acetylmuramic acid and N-acetyl-D-glucosamine residues in a peptidoglycan and between N-acetyl-D-glucosamine residues in chitodextrins.. Its function is as follows. Lysozymes have primarily a bacteriolytic function; those in tissues and body fluids are associated with the monocyte-macrophage system and enhance the activity of immunoagents. This Homo sapiens (Human) protein is Lysozyme C (LYZ).